We begin with the raw amino-acid sequence, 422 residues long: UDP-N-acetylglucosamine 1-carboxyvinyltransferase (422 aa).

Residue 22–23 coordinates phosphoenolpyruvate; the sequence is KN. UDP-N-acetyl-alpha-D-glucosamine is bound at residue R93. C117 serves as the catalytic Proton donor. C117 carries the 2-(S-cysteinyl)pyruvic acid O-phosphothioketal modification. UDP-N-acetyl-alpha-D-glucosamine is bound by residues 122 to 126, D308, and L330; that span reads RPVDL.

It belongs to the EPSP synthase family. MurA subfamily.

It is found in the cytoplasm. The catalysed reaction is phosphoenolpyruvate + UDP-N-acetyl-alpha-D-glucosamine = UDP-N-acetyl-3-O-(1-carboxyvinyl)-alpha-D-glucosamine + phosphate. The protein operates within cell wall biogenesis; peptidoglycan biosynthesis. Cell wall formation. Adds enolpyruvyl to UDP-N-acetylglucosamine. This Helicobacter pylori (strain J99 / ATCC 700824) (Campylobacter pylori J99) protein is UDP-N-acetylglucosamine 1-carboxyvinyltransferase.